Consider the following 263-residue polypeptide: Microtubule-associated protein RP/EB family member 1 (263 aa).

The Calponin-homology (CH) domain maps to 14 to 116 (NLSRHDMLAW…FVQWFKKFFD (103 aa)). Residues 150 to 182 (KPLGTGSAGPQRPIVAQRTPATPKGGTGMVKKA) form a disordered region. The 71-residue stretch at 180–250 (KKAAGDDESA…LYATDEGFVI (71 aa)) folds into the EB1 C-terminal domain.

The protein belongs to the MAPRE family.

It is found in the cytoplasm. It localises to the cytoskeleton. Its subcellular location is the microtubule organizing center. The protein resides in the centrosome. The protein localises to the golgi apparatus. It is found in the spindle. It localises to the spindle pole. Plus-end tracking protein (+TIP) that binds to the plus-end of microtubules and regulates the dynamics of the microtubule cytoskeleton. Promotes cytoplasmic microtubule nucleation and elongation. Involved in mitotic spindle positioning by stabilizing microtubules and promoting dynamic connection between astral microtubules and the cortex during mitotic chromosome segregation. The sequence is that of Microtubule-associated protein RP/EB family member 1 (MAPRE1) from Coturnix japonica (Japanese quail).